The following is a 338-amino-acid chain: Ribosomal RNA small subunit methyltransferase C (338 aa).

This sequence belongs to the methyltransferase superfamily. RsmC family. Monomer.

It is found in the cytoplasm. The enzyme catalyses guanosine(1207) in 16S rRNA + S-adenosyl-L-methionine = N(2)-methylguanosine(1207) in 16S rRNA + S-adenosyl-L-homocysteine + H(+). In terms of biological role, specifically methylates the guanine in position 1207 of 16S rRNA in the 30S particle. This is Ribosomal RNA small subunit methyltransferase C from Acinetobacter baylyi (strain ATCC 33305 / BD413 / ADP1).